We begin with the raw amino-acid sequence, 491 residues long: Aspartyl/glutamyl-tRNA(Asn/Gln) amidotransferase subunit B (491 aa).

This sequence belongs to the GatB/GatE family. GatB subfamily. Heterotrimer of A, B and C subunits.

It catalyses the reaction L-glutamyl-tRNA(Gln) + L-glutamine + ATP + H2O = L-glutaminyl-tRNA(Gln) + L-glutamate + ADP + phosphate + H(+). The catalysed reaction is L-aspartyl-tRNA(Asn) + L-glutamine + ATP + H2O = L-asparaginyl-tRNA(Asn) + L-glutamate + ADP + phosphate + 2 H(+). Its function is as follows. Allows the formation of correctly charged Asn-tRNA(Asn) or Gln-tRNA(Gln) through the transamidation of misacylated Asp-tRNA(Asn) or Glu-tRNA(Gln) in organisms which lack either or both of asparaginyl-tRNA or glutaminyl-tRNA synthetases. The reaction takes place in the presence of glutamine and ATP through an activated phospho-Asp-tRNA(Asn) or phospho-Glu-tRNA(Gln). The sequence is that of Aspartyl/glutamyl-tRNA(Asn/Gln) amidotransferase subunit B from Trichormus variabilis (strain ATCC 29413 / PCC 7937) (Anabaena variabilis).